The sequence spans 875 residues: Alanine--tRNA ligase (875 aa).

Zn(2+) contacts are provided by His564, His568, Cys666, and His670.

It belongs to the class-II aminoacyl-tRNA synthetase family. In terms of assembly, homotetramer. Requires Zn(2+) as cofactor.

It localises to the cytoplasm. The catalysed reaction is tRNA(Ala) + L-alanine + ATP = L-alanyl-tRNA(Ala) + AMP + diphosphate. Functionally, catalyzes the attachment of alanine to tRNA(Ala) in a two-step reaction: alanine is first activated by ATP to form Ala-AMP and then transferred to the acceptor end of tRNA(Ala). Also edits incorrectly charged Ser-tRNA(Ala) and Gly-tRNA(Ala) via its editing domain. The protein is Alanine--tRNA ligase of Sodalis glossinidius (strain morsitans).